The primary structure comprises 485 residues: Protein adenylyltransferase Fic (485 aa).

The helical transmembrane segment at 21 to 43 (YRFVLFFIAGSLAAFAFHALTSS) threads the bilayer. TPR repeat units follow at residues 107-140 (AMGA…APKH) and 141-175 (PEVL…SPSN). The Inhibitory (S/T)XXXE(G/N) motif signature appears at 232–237 (SVGIEG). ATP contacts are provided by residues glutamate 236 and 317–320 (VGGH). The Fido domain occupies 286–421 (ITLKDILELH…IRPFVRFIAD (136 aa)). Residue histidine 364 is part of the active site. Residues 368-375 (DGNGRTSR), 400-401 (YY), and asparagine 408 each bind ATP.

The protein belongs to the fic family. In terms of assembly, homodimer.

Its subcellular location is the membrane. It catalyses the reaction L-tyrosyl-[protein] + ATP = O-(5'-adenylyl)-L-tyrosyl-[protein] + diphosphate. The enzyme catalyses L-threonyl-[protein] + ATP = 3-O-(5'-adenylyl)-L-threonyl-[protein] + diphosphate. The catalysed reaction is 3-O-(5'-adenylyl)-L-threonyl-[protein] + H2O = L-threonyl-[protein] + AMP + H(+). With respect to regulation, the side chain of Glu-236 determines which of the two opposing activities (AMPylase or de-AMPylase) will take place. In response to endoplasmic reticulum stress, mediates de-AMPylase activity. Adenylyltransferase activity is inhibited by the inhibitory helix present at the N-terminus: Glu-236 binds ATP and competes with ATP-binding at Arg-375, thereby preventing adenylyltransferase activity. In unstressed cells, disengagement of Glu-236 promotes adenylyltransferase activity. Activation dissociates ATP-binding from Glu-236, allowing ordered binding of the entire ATP moiety with the alpha-phosphate in an orientation that is productive for accepting an incoming target hydroxyl side chain. In terms of biological role, protein that can both mediate the addition of adenosine 5'-monophosphate (AMP) to specific residues of target proteins (AMPylation), and the removal of the same modification from target proteins (de-AMPylation), depending on the context. The side chain of Glu-236 determines which of the two opposing activities (AMPylase or de-AMPylase) will take place. Acts as a key regulator of the unfolded protein response (UPR) by mediating AMPylation or de-AMPylation of Hsc70-3/BiP. In unstressed cells, acts as an adenylyltransferase by mediating AMPylation of Hsc70-3/BiP at 'Thr-518', thereby inactivating it. In response to endoplasmic reticulum stress, acts as a phosphodiesterase by mediating removal of ATP (de-AMPylation) from Hsc70-3/BiP at 'Thr-518', leading to restore HSPA5/BiP activity. This chain is Protein adenylyltransferase Fic, found in Drosophila virilis (Fruit fly).